The primary structure comprises 257 residues: Ribonuclease HII (257 aa).

One can recognise an RNase H type-2 domain in the interval threonine 72 to lysine 257. 3 residues coordinate a divalent metal cation: aspartate 78, glutamate 79, and aspartate 170.

This sequence belongs to the RNase HII family. Mn(2+) serves as cofactor. Mg(2+) is required as a cofactor.

The protein resides in the cytoplasm. The enzyme catalyses Endonucleolytic cleavage to 5'-phosphomonoester.. In terms of biological role, endonuclease that specifically degrades the RNA of RNA-DNA hybrids. The sequence is that of Ribonuclease HII from Bacillus mycoides (strain KBAB4) (Bacillus weihenstephanensis).